Reading from the N-terminus, the 245-residue chain is 1-(5-phosphoribosyl)-5-[(5-phosphoribosylamino)methylideneamino] imidazole-4-carboxamide isomerase (245 aa).

Asp7 serves as the catalytic Proton acceptor. Asp129 acts as the Proton donor in catalysis.

It belongs to the HisA/HisF family.

The protein localises to the cytoplasm. It catalyses the reaction 1-(5-phospho-beta-D-ribosyl)-5-[(5-phospho-beta-D-ribosylamino)methylideneamino]imidazole-4-carboxamide = 5-[(5-phospho-1-deoxy-D-ribulos-1-ylimino)methylamino]-1-(5-phospho-beta-D-ribosyl)imidazole-4-carboxamide. It participates in amino-acid biosynthesis; L-histidine biosynthesis; L-histidine from 5-phospho-alpha-D-ribose 1-diphosphate: step 4/9. This is 1-(5-phosphoribosyl)-5-[(5-phosphoribosylamino)methylideneamino] imidazole-4-carboxamide isomerase from Escherichia coli (strain 55989 / EAEC).